Consider the following 219-residue polypeptide: MKLHFVKNLADRREIMMNYHLLARGIRDPAVLKAMLEVPREAFVAEGMEELAYDDYALPIDEGQTISQPYIVAYMAESLELSAADRVLEIGTGSGYAAAVLSRIVSTVYTVERLAGLARSAHQRLEMLSYGNIHVLEGDGTLGWPEYAPYDAIVVTAGAPDLPKPLLSQLSVGGRLVIPVGATPYLQMLVRVRRVSEEEYRSEELCPVRFVPLIGAAGW.

The active site involves Ser67.

This sequence belongs to the methyltransferase superfamily. L-isoaspartyl/D-aspartyl protein methyltransferase family.

The protein localises to the cytoplasm. The enzyme catalyses [protein]-L-isoaspartate + S-adenosyl-L-methionine = [protein]-L-isoaspartate alpha-methyl ester + S-adenosyl-L-homocysteine. Catalyzes the methyl esterification of L-isoaspartyl residues in peptides and proteins that result from spontaneous decomposition of normal L-aspartyl and L-asparaginyl residues. It plays a role in the repair and/or degradation of damaged proteins. The sequence is that of Protein-L-isoaspartate O-methyltransferase 1 from Geotalea uraniireducens (strain Rf4) (Geobacter uraniireducens).